We begin with the raw amino-acid sequence, 158 residues long: Transcriptional repressor NrdR (158 aa).

A zinc finger lies at 3-34; it reads CPYCGFEESKVVDSRSTEDHKAIRRRRECLKC. An ATP-cone domain is found at 49-139; it reads VLVIKRDSNR…VYRQFKDINT (91 aa).

This sequence belongs to the NrdR family. The cofactor is Zn(2+).

Functionally, negatively regulates transcription of bacterial ribonucleotide reductase nrd genes and operons by binding to NrdR-boxes. This Clostridium novyi (strain NT) protein is Transcriptional repressor NrdR.